Consider the following 910-residue polypeptide: Staphylococcal nuclease domain-containing protein 1 (910 aa).

An N-acetylalanine modification is found at A2. TNase-like domains follow at residues 18-166, 193-328, and 341-496; these read TVQR…MWSE, KPVN…IWRD, and KQFV…LHSK. T103 is subject to Phosphothreonine. Residue K193 is modified to N6-acetyllysine. T240 is subject to Phosphothreonine. 2 consecutive short sequence motifs (nuclear localization signal) follow at residues 321-325 and 388-392; these read RRLRI and KKLRP. S426 carries the post-translational modification Phosphoserine. A Glycyl lysine isopeptide (Lys-Gly) (interchain with G-Cter in SUMO2) cross-link involves residue K513. The 136-residue stretch at 525 to 660 folds into the TNase-like 4 domain; it reads GRSEAVVEYV…KQKKEKVWAH (136 aa). Residue K641 is modified to N6-acetyllysine. S645 is subject to Phosphoserine. The region spanning 729-787 is the Tudor domain; sequence APRRGEFCIAKFVDGEWYRARVEKVESPAKVHVFYIDYGNREILPSTRLGTLPPAFSTR. Residue T779 is modified to Phosphothreonine. S785 and S909 each carry phosphoserine.

As to quaternary structure, forms a ternary complex with STAT6 and POLR2A. Associates with the RNA-induced silencing complex (RISC). Interacts with the RISC components AGO2, FMR1 and TNRC6A. Interacts with GTF2E1 and GTF2E2. Interacts with PIM1. Interacts with STAT5. Interacts with SYT11 (via C2 2 domain); the interaction with SYT11 is direct. In terms of processing, phosphorylated by PIM1 in vitro. In lactating cows highly expressed in mammary epithelial cells.

It localises to the cytoplasm. The protein localises to the nucleus. The protein resides in the melanosome. The catalysed reaction is Endonucleolytic cleavage to nucleoside 3'-phosphates and 3'-phosphooligonucleotide end-products.. Endonuclease that mediates miRNA decay of both protein-free and AGO2-loaded miRNAs. As part of its function in miRNA decay, regulates mRNAs involved in G1-to-S phase transition. Functions as a bridging factor between STAT6 and the basal transcription factor. Plays a role in PIM1 regulation of MYB activity. Functions as a transcriptional coactivator for STAT5. In Bos taurus (Bovine), this protein is Staphylococcal nuclease domain-containing protein 1 (SND1).